Reading from the N-terminus, the 51-residue chain is uncharacterized protein (51 aa).

This is an uncharacterized protein from Thermoproteus tenax virus 1 (strain KRA1) (TTV1).